Consider the following 1390-residue polypeptide: Bromodomain adjacent to zinc finger domain protein 2 (1390 aa).

Disordered stretches follow at residues 30–67 (AKIQKATASSPSKSTNGTSASTSAVPSTSGTSSSQNEA), 178–215 (AKKKPAGVASTSSASTSSSTPSTSSASITSSNNNAANN), and 235–269 (QKQQQQQKDTQKKADQAKKAKELAKQQQKEQDVKN). A compositionally biased stretch (polar residues) spans 35–45 (ATASSPSKSTN). 2 stretches are compositionally biased toward low complexity: residues 46-63 (GTSASTSAVPSTSGTSSS) and 186-215 (ASTSSASTSSSTPSTSSASITSSNNNAANN). A compositionally biased stretch (basic and acidic residues) spans 243–269 (DTQKKADQAKKAKELAKQQQKEQDVKN). One can recognise an MBD domain in the interval 323–395 (KTNEAMLRLP…DNFLFNTKLV (73 aa)). The DDT domain occupies 524 to 588 (SQGFADALMV…LRLALEFPGM (65 aa)). The segment covering 705 to 724 (KEEQNHESDSEPPTRPDTPK) has biased composition (basic and acidic residues). The tract at residues 705–729 (KEEQNHESDSEPPTRPDTPKKATVA) is disordered. A PHD-type zinc finger spans residues 1100–1149 (EALCQICKSMDGDEMLVCDGCESGCHMECFRPRMTKVPEGDWFCQRCREE). The disordered stretch occupies residues 1218-1241 (EERELEDDNHAENGENTKNGHMNG). A Bromo domain is found at 1273–1377 (LPKNMNKELC…KFFQKRWKQL (105 aa)).

The protein belongs to the WAL family. In terms of assembly, interacts with set-6. In terms of tissue distribution, broadly expressed in the nervous system, including head, body and tail neurons.

Its subcellular location is the nucleus. It is found in the chromosome. Its function is as follows. Chromatin reader protein, involved in positively modulating the rate of age-related behavioral deterioration. Positively modulates the level of global trimethylated 'Lys-9' of histone H3 (H3K9me3), but not of H3K9me2 or H3K9me1. May repress the expression of mitochondrial function-related genes by occupying their promoter regions, working in concert with histone methyltransferase, set-6. Involved in modulation of the mitochondrial unfolded protein response (UPR). Negatively regulates expression of bas-1, a serotonin (5-HT) and dopamine synthesizing enzyme (DOPA decarboxylase), with aging. Negatively modulates levels of endogenous 5-HT and dopamine with aging. Involved in modulating longevity, probably as a result of enhanced stress resistance via mechanisms related to dietary restriction and mitochondrial function. This chain is Bromodomain adjacent to zinc finger domain protein 2, found in Caenorhabditis elegans.